A 91-amino-acid polypeptide reads, in one-letter code: Small ribosomal subunit protein uS19 (91 aa).

It belongs to the universal ribosomal protein uS19 family.

In terms of biological role, protein S19 forms a complex with S13 that binds strongly to the 16S ribosomal RNA. The sequence is that of Small ribosomal subunit protein uS19 from Pseudomonas fluorescens (strain Pf0-1).